Consider the following 389-residue polypeptide: Homoserine O-acetyltransferase (389 aa).

The 309-residue stretch at 63-371 folds into the AB hydrolase-1 domain; that stretch reads NAVLVLHALT…SSDYGHDGFL (309 aa). Ser168 serves as the catalytic Nucleophile. Arg240 is a binding site for substrate. Catalysis depends on residues Asp334 and His367. Asp368 contributes to the substrate binding site.

It belongs to the AB hydrolase superfamily. MetX family. Homodimer.

The protein localises to the cytoplasm. The catalysed reaction is L-homoserine + acetyl-CoA = O-acetyl-L-homoserine + CoA. It participates in amino-acid biosynthesis; L-methionine biosynthesis via de novo pathway; O-acetyl-L-homoserine from L-homoserine: step 1/1. In terms of biological role, transfers an acetyl group from acetyl-CoA to L-homoserine, forming acetyl-L-homoserine. The polypeptide is Homoserine O-acetyltransferase (Clavibacter michiganensis subsp. michiganensis (strain NCPPB 382)).